A 198-amino-acid polypeptide reads, in one-letter code: 7-methyl-GTP pyrophosphatase (198 aa).

Asp75 functions as the Proton acceptor in the catalytic mechanism.

It belongs to the Maf family. YceF subfamily. A divalent metal cation is required as a cofactor.

It localises to the cytoplasm. It catalyses the reaction N(7)-methyl-GTP + H2O = N(7)-methyl-GMP + diphosphate + H(+). Its function is as follows. Nucleoside triphosphate pyrophosphatase that hydrolyzes 7-methyl-GTP (m(7)GTP). May have a dual role in cell division arrest and in preventing the incorporation of modified nucleotides into cellular nucleic acids. The sequence is that of 7-methyl-GTP pyrophosphatase from Bartonella quintana (strain Toulouse) (Rochalimaea quintana).